A 301-amino-acid chain; its full sequence is Large ribosomal subunit protein uL4 (301 aa).

Residues 1-223 (MNETKTIDVL…TQALSAQPEV (223 aa)) are large ribosomal subunit protein uL4. The tract at residues 49–105 (QGTHATKTRGQVSGGGKKPWRQKGTGRARQGSTRAPQWVGGGTVHGPQPRSYAQRTP) is disordered. The interval 224–301 (PETNVADQHP…KSDSEKEDAK (78 aa)) is unknown.

It belongs to the universal ribosomal protein uL4 family. Part of the 50S ribosomal subunit.

One of the primary rRNA binding proteins, this protein initially binds near the 5'-end of the 23S rRNA. It is important during the early stages of 50S assembly. It makes multiple contacts with different domains of the 23S rRNA in the assembled 50S subunit and ribosome. Functionally, forms part of the polypeptide exit tunnel. The sequence is that of Large ribosomal subunit protein uL4 from Cutibacterium acnes (strain DSM 16379 / KPA171202) (Propionibacterium acnes).